The primary structure comprises 398 residues: Phosphoglycerate kinase (398 aa).

Residues 23-25, Arg-38, 61-64, Arg-119, and Arg-152 contribute to the substrate site; these read DLN and HFGR. ATP is bound by residues Lys-202, Glu-324, and 354-357; that span reads GGDT.

This sequence belongs to the phosphoglycerate kinase family. Monomer.

The protein localises to the cytoplasm. The enzyme catalyses (2R)-3-phosphoglycerate + ATP = (2R)-3-phospho-glyceroyl phosphate + ADP. It functions in the pathway carbohydrate degradation; glycolysis; pyruvate from D-glyceraldehyde 3-phosphate: step 2/5. In Bradyrhizobium diazoefficiens (strain JCM 10833 / BCRC 13528 / IAM 13628 / NBRC 14792 / USDA 110), this protein is Phosphoglycerate kinase.